Consider the following 283-residue polypeptide: Lactoylglutathione lyase GLX1 (283 aa).

Alanine 2 carries the post-translational modification N-acetylalanine. VOC domains lie at arginine 17–arginine 141 and proline 147–asparagine 275. Histidine 20 contributes to the Zn(2+) binding site. Arginine 24 lines the substrate pocket. Position 71 (glutamate 71) interacts with Zn(2+). Positions 75 and 89 each coordinate substrate. 3 residues coordinate Zn(2+): histidine 89, glutamate 137, and glutamine 150. Glutamate 137 (proton donor/acceptor) is an active-site residue. Residues glutamine 150 and arginine 154 each coordinate substrate. Glutamine 150 provides a ligand contact to a divalent metal cation. Position 201 (glutamate 201) interacts with Zn(2+). Glutamate 201 lines the a divalent metal cation pocket. A substrate-binding site is contributed by asparagine 205. Residue glutamine 219 coordinates a divalent metal cation. Proline 251 to leucine 252 is a binding site for substrate. Residue valine 271 coordinates a divalent metal cation.

The protein belongs to the glyoxalase I family. Homodimer. The cofactor is Zn(2+). Phosphorylated by SnRK2.8.

It catalyses the reaction (R)-S-lactoylglutathione = methylglyoxal + glutathione. Its pathway is secondary metabolite metabolism; methylglyoxal degradation; (R)-lactate from methylglyoxal: step 1/2. Its function is as follows. Catalyzes the conversion of hemimercaptal, formed from methylglyoxal and glutathione, to S-lactoylglutathione. The protein is Lactoylglutathione lyase GLX1 of Arabidopsis thaliana (Mouse-ear cress).